The chain runs to 288 residues: Oxaloacetate decarboxylase (288 aa).

Ser-47 contributes to the substrate binding site. Residue Asp-85 coordinates Mg(2+). Arg-156 and His-232 together coordinate substrate.

Belongs to the isocitrate lyase/PEP mutase superfamily. Oxaloacetate decarboxylase family. As to quaternary structure, homotetramer; dimer of dimers. Requires Mg(2+) as cofactor.

It catalyses the reaction oxaloacetate + H(+) = pyruvate + CO2. Functionally, catalyzes the decarboxylation of oxaloacetate into pyruvate. Seems to play a role in maintaining cellular concentrations of bicarbonate and pyruvate. The polypeptide is Oxaloacetate decarboxylase (Rhodopseudomonas palustris (strain BisB18)).